The sequence spans 96 residues: Exodeoxyribonuclease 7 small subunit (96 aa).

The span at 61-79 (ALTKDESQKTNKTGFRTES) shows a compositional bias: basic and acidic residues. The interval 61 to 96 (ALTKDESQKTNKTGFRTESKSTSQTSSDSVLEEDLF) is disordered. The segment covering 80–89 (KSTSQTSSDS) has biased composition (low complexity).

This sequence belongs to the XseB family. Heterooligomer composed of large and small subunits.

It localises to the cytoplasm. It carries out the reaction Exonucleolytic cleavage in either 5'- to 3'- or 3'- to 5'-direction to yield nucleoside 5'-phosphates.. Its function is as follows. Bidirectionally degrades single-stranded DNA into large acid-insoluble oligonucleotides, which are then degraded further into small acid-soluble oligonucleotides. In Leptospira borgpetersenii serovar Hardjo-bovis (strain JB197), this protein is Exodeoxyribonuclease 7 small subunit.